Consider the following 389-residue polypeptide: Large ribosomal subunit protein uL3 (389 aa).

It belongs to the universal ribosomal protein uL3 family. In terms of assembly, component of the large ribosomal subunit. Mature ribosomes consist of a small (40S) and a large (60S) subunit. The 40S subunit contains about 32 different proteins and 1 molecule of RNA (18S). The 60S subunit contains 45 different proteins and 3 molecules of RNA (25S, 5.8S and 5S).

It is found in the cytoplasm. Functionally, component of the ribosome, a large ribonucleoprotein complex responsible for the synthesis of proteins in the cell. The small ribosomal subunit (SSU) binds messenger RNAs (mRNAs) and translates the encoded message by selecting cognate aminoacyl-transfer RNA (tRNA) molecules. The large subunit (LSU) contains the ribosomal catalytic site termed the peptidyl transferase center (PTC), which catalyzes the formation of peptide bonds, thereby polymerizing the amino acids delivered by tRNAs into a polypeptide chain. The nascent polypeptides leave the ribosome through a tunnel in the LSU and interact with protein factors that function in enzymatic processing, targeting, and the membrane insertion of nascent chains at the exit of the ribosomal tunnel. RPL3 plays a role in coordinating processes of accommodating the aminoacyl-tRNA in the PTC. In Candida albicans (strain SC5314 / ATCC MYA-2876) (Yeast), this protein is Large ribosomal subunit protein uL3.